The primary structure comprises 335 residues: 2-acylglycerol O-acyltransferase 2 (335 aa).

The next 2 helical transmembrane spans lie at 24 to 44 (WAVSFLAMAQCCIALYILLLF) and 104 to 124 (YIMGFHPHGVLVVGAFGNFCT). Residue asparagine 206 is glycosylated (N-linked (GlcNAc...) asparagine).

The protein belongs to the diacylglycerol acyltransferase family.

The protein localises to the endoplasmic reticulum membrane. The protein resides in the cytoplasm. It is found in the perinuclear region. The catalysed reaction is a 2-acylglycerol + an acyl-CoA = a 1,2-diacylglycerol + CoA. It catalyses the reaction a 2-acylglycerol + an acyl-CoA = a 1,2-diacyl-sn-glycerol + CoA. It carries out the reaction a 2-acylglycerol + an acyl-CoA = a 2,3-diacyl-sn-glycerol + CoA. The enzyme catalyses a 1-acylglycerol + an acyl-CoA = a 1,2-diacylglycerol + CoA. The catalysed reaction is a 1-acylglycerol + an acyl-CoA = a 1,3-diacylglycerol + CoA. It catalyses the reaction 1-O-alkylglycerol + an acyl-CoA = 1-O-alkyl-3-acylglycerol + CoA. It carries out the reaction an acyl-CoA + a 1,2-diacyl-sn-glycerol = a triacyl-sn-glycerol + CoA. Its pathway is glycerolipid metabolism; triacylglycerol biosynthesis. Involved in glycerolipid synthesis and lipid metabolism. Catalyzes the formation of diacylglycerol, the precursor of triacylglycerol, by transferring the acyl chain of a fatty acyl-CoA to a monoacylglycerol. Plays a central role in absorption of dietary fat in the small intestine by catalyzing the resynthesis of triacylglycerol in enterocytes. Has a preference toward monoacylglycerols containing unsaturated fatty acids in an order of C18:3 &gt; C18:2 &gt; C18:1 &gt; C18:0 at sn-2. Able to use 1-monoalkylglycerol (1-MAkG, 1-O-alkylglycerol) as an acyl acceptor for the synthesis of monoalkyl-monoacylglycerol (MAMAG, 1-O-alkyl-3-acylglycerol or 1-O-alkyl-2-acylglycerol) and subsequently, with lower efficiency, may add another acyl chain producing monoalkyl-diacylglycerol (MADAG, 1-O-alkyl-2,3-diacylglycerol). Possesses weak but significant activity with diacylglycerol as substrate, producing triacylglycerol (triacyl-sn-glycerol). The sequence is that of 2-acylglycerol O-acyltransferase 2 (mogat2) from Xenopus tropicalis (Western clawed frog).